The primary structure comprises 276 residues: Phospholipid phosphatase 2 (276 aa).

The Cytoplasmic portion of the chain corresponds to 1–4 (MERR). A helical membrane pass occupies residues 5 to 25 (WVFVLLDVLCVLVASLPFIIL). Over 26–51 (TLVNAPYKRGFYCGDDSIRYPYRPDT) the chain is Lumenal. The chain crosses the membrane as a helical span at residues 52–72 (ITHGLMAGVIITATVILVSLG). Residues 73-87 (EAYLVYTDRLYSRSN) are Cytoplasmic-facing. Residues 88–108 (FNNYVAAIYKVLGTFLFGAAV) form a helical membrane-spanning segment. Over 109–161 (SQSLTDLAKYMIGRLRPSFLAVCDPDWSQVNCSGYVQLEVCRGSPANVTEARL) the chain is Lumenal. Positions 117–125 (KYMIGRLRP) are phosphatase sequence motif I. Residues asparagine 139 and asparagine 155 are each glycosylated (N-linked (GlcNAc...) asparagine). The chain crosses the membrane as a helical span at residues 162 to 182 (SFYSGHSSFGMYCMLFLALYV). The interval 164 to 167 (YSGH) is phosphatase sequence motif II. Histidine 167 functions as the Proton donors in the catalytic mechanism. Topologically, residues 183-189 (QARLCWK) are cytoplasmic. A helical transmembrane segment spans residues 190–210 (WARLLRPTVQFFLVAFAIYVG). The Lumenal portion of the chain corresponds to 211 to 218 (YTRVSDHK). A phosphatase sequence motif III region spans residues 212-223 (TRVSDHKHHWSD). Histidine 219 (nucleophile) is an active-site residue. A helical membrane pass occupies residues 219–239 (HHWSDVLVGLLQGALVACLTV). Residues 240 to 276 (RYVSDFFKSRPPQPCQEDEVPERKPSLSLTLTLGDRP) lie on the Cytoplasmic side of the membrane. The interval 251-276 (PQPCQEDEVPERKPSLSLTLTLGDRP) is disordered.

This sequence belongs to the PA-phosphatase related phosphoesterase family. Forms functional homodimers and homooligomers. Can also form heterooligomers with PLPP1 and PLPP3. N-glycosylated. In terms of tissue distribution, expressed at high levels in lung, liver and kidney; at low levels in heart and brain, and was not detected in skeletal muscle.

The protein resides in the membrane. The protein localises to the cell membrane. It is found in the early endosome membrane. It localises to the endoplasmic reticulum membrane. The catalysed reaction is a 1,2-diacyl-sn-glycero-3-phosphate + H2O = a 1,2-diacyl-sn-glycerol + phosphate. It carries out the reaction 1,2-dihexadecanoyl-sn-glycero-3-phosphate + H2O = 1,2-dihexadecanoyl-sn-glycerol + phosphate. It catalyses the reaction 1,2-di-(9Z-octadecenoyl)-sn-glycero-3-phosphate + H2O = 1,2-di-(9Z-octadecenoyl)-sn-glycerol + phosphate. The enzyme catalyses a monoacyl-sn-glycero-3-phosphate + H2O = a monoacylglycerol + phosphate. The catalysed reaction is (9Z)-octadecenoyl-sn-glycero-3-phosphate + H2O = (9Z-octadecenoyl)-glycerol + phosphate. It carries out the reaction sphing-4-enine 1-phosphate + H2O = sphing-4-enine + phosphate. It catalyses the reaction an N-acylsphing-4-enine 1-phosphate + H2O = an N-acylsphing-4-enine + phosphate. The enzyme catalyses N-(octanoyl)-sphing-4-enine-1-phosphate + H2O = N-octanoylsphing-4-enine + phosphate. The catalysed reaction is N-(9Z-octadecenoyl)-ethanolamine phosphate + H2O = N-(9Z-octadecenoyl) ethanolamine + phosphate. The protein operates within lipid metabolism; phospholipid metabolism. Its activity is regulated as follows. Magnesium-independent phospholipid phosphatase. Insensitive to N-ethylmaleimide. In terms of biological role, magnesium-independent phospholipid phosphatase that catalyzes the dephosphorylation of a variety of glycerolipid and sphingolipid phosphate esters including phosphatidate/PA, lysophosphatidate/LPA, sphingosine 1-phosphate/S1P and ceramide 1-phosphate/C1P. Has no apparent extracellular phosphatase activity and therefore most probably acts intracellularly. Also acts on N-oleoyl ethanolamine phosphate/N-(9Z-octadecenoyl)-ethanolamine phosphate, a potential physiological compound. Through dephosphorylation of these bioactive lipid mediators produces new bioactive compounds and may regulate signal transduction in different cellular processes. Indirectly regulates, for instance, cell cycle G1/S phase transition through its phospholipid phosphatase activity. In Mus musculus (Mouse), this protein is Phospholipid phosphatase 2.